The chain runs to 685 residues: Multisite-specific tRNA:(cytosine-C(5))-methyltransferase trm4b (685 aa).

S-adenosyl-L-methionine contacts are provided by residues 167–173 (CAAPGSK), aspartate 208, aspartate 235, and aspartate 270. Residue cysteine 323 is the Nucleophile of the active site.

This sequence belongs to the class I-like SAM-binding methyltransferase superfamily. RsmB/NOP family. TRM4 subfamily.

The protein resides in the nucleus. The catalysed reaction is cytidine(49) in tRNA precursor + S-adenosyl-L-methionine = 5-methylcytidine(49) in tRNA precursor + S-adenosyl-L-homocysteine + H(+). It carries out the reaction cytidine(50) in tRNA + S-adenosyl-L-methionine = 5-methylcytidine(50) in tRNA + S-adenosyl-L-homocysteine + H(+). The enzyme catalyses cytidine(60) in tRNA(Asp) + S-adenosyl-L-methionine = 5-methylcytidine(60) in tRNA(Asp) + S-adenosyl-L-homocysteine + H(+). It catalyses the reaction cytidine(61) in tRNA(Asp) + S-adenosyl-L-methionine = 5-methylcytidine(61) in tRNA(Asp) + S-adenosyl-L-homocysteine + H(+). The catalysed reaction is cytidine(62) in tRNA(Asp) + S-adenosyl-L-methionine = 5-methylcytidine(62) in tRNA(Asp) + S-adenosyl-L-homocysteine + H(+). Its function is as follows. tRNA cytosine C(5)-methyltransferase that methylates cytosine to 5-methylcytosine (m5C) in tRNAs at position 49 and 50. Trm4a and trm4b methylate different sets of tRNAs. Also methylates cytosine to m5C at positions (60, 61 and 62) in tRNA(Asp). The chain is Multisite-specific tRNA:(cytosine-C(5))-methyltransferase trm4b from Schizosaccharomyces pombe (strain 972 / ATCC 24843) (Fission yeast).